The sequence spans 66 residues: MAFLKKSLFLVLFLGLVSLSICDEEKRQDEDDDDDDDEEKRGVFDIIKDAGKQLVAHATGKIAEKV.

The signal sequence occupies residues 1–22 (MAFLKKSLFLVLFLGLVSLSIC). Residues 23-39 (DEEKRQDEDDDDDDDEE) constitute a propeptide that is removed on maturation. The residue at position 66 (Val-66) is a Valine amide.

Expressed by the skin glands.

It localises to the secreted. In terms of biological role, has no antibacterial activity against Gram-negative bacteria E.coli ATCC 25922, S.pneumoniae ATCC 700603 and S.choleraesuis ATCC 14028 or against Gram-positive bacterium S.aureus ATCC 29313. Shows no hemolytic activity and no cytotoxicity. The chain is Ocellatin-PT2 from Leptodactylus pustulatus (Ceara white-lipped frog).